The primary structure comprises 1040 residues: Multidrug resistance protein MdtB (1040 aa).

A run of 12 helical transmembrane segments spans residues L25–A45, L347–A367, I369–L389, L396–I416, I440–F460, F472–P492, W537–I557, L863–I883, F888–A908, I911–V931, I968–V988, and I998–I1018.

The protein belongs to the resistance-nodulation-cell division (RND) (TC 2.A.6) family. MdtB subfamily. In terms of assembly, part of a tripartite efflux system composed of MdtA, MdtB and MdtC. MdtB forms a heteromultimer with MdtC.

The protein localises to the cell inner membrane. Functionally, the MdtABC tripartite complex confers resistance against novobiocin and deoxycholate. This Escherichia coli O127:H6 (strain E2348/69 / EPEC) protein is Multidrug resistance protein MdtB.